The sequence spans 158 residues: Large ribosomal subunit protein uL13 (158 aa).

Residues proline 129–arginine 158 are disordered. Residues glycine 144–arginine 158 are compositionally biased toward low complexity.

It belongs to the universal ribosomal protein uL13 family. In terms of assembly, part of the 50S ribosomal subunit.

In terms of biological role, this protein is one of the early assembly proteins of the 50S ribosomal subunit, although it is not seen to bind rRNA by itself. It is important during the early stages of 50S assembly. This chain is Large ribosomal subunit protein uL13, found in Anaplasma phagocytophilum (strain HZ).